A 218-amino-acid polypeptide reads, in one-letter code: Adenylate kinase (218 aa).

Residue G10–T15 participates in ATP binding. The tract at residues S30–V59 is NMP. AMP contacts are provided by residues T31, R36, G57–V59, G85–R88, and Q92. The segment at G122–D159 is LID. ATP contacts are provided by residues R123 and T132–Y133. 2 residues coordinate AMP: R156 and R167. G203 provides a ligand contact to ATP.

The protein belongs to the adenylate kinase family. In terms of assembly, monomer.

It localises to the cytoplasm. The catalysed reaction is AMP + ATP = 2 ADP. It participates in purine metabolism; AMP biosynthesis via salvage pathway; AMP from ADP: step 1/1. Its function is as follows. Catalyzes the reversible transfer of the terminal phosphate group between ATP and AMP. Plays an important role in cellular energy homeostasis and in adenine nucleotide metabolism. The protein is Adenylate kinase of Variovorax paradoxus (strain S110).